Consider the following 540-residue polypeptide: RNA exonuclease 3 (540 aa).

The segment at 7-34 (QFKHIVCPFLRTGRKCQSRNCFFSHDFQ) adopts a C3H1-type zinc-finger fold. An Exonuclease domain is found at 382–529 (HCALDCELCY…EDAVSALQLV (148 aa)).

This sequence belongs to the REXO1/REXO3 family.

Its subcellular location is the cytoplasm. It localises to the nucleus. Functionally, 3' to 5' exoribonuclease required for proper 3' end maturation of MRP RNA and of the U5L snRNA. This chain is RNA exonuclease 3 (rex3), found in Schizosaccharomyces pombe (strain 972 / ATCC 24843) (Fission yeast).